The sequence spans 227 residues: MTDSNRDGAAAHSLHAGVYPGNLFMVVAPSGAGKSTLVNALLSKDPEIRLSISYTTRKPRPGEQDGQHYHFTTVEDFRERHARHEFLESAEVHGNYYGTSRVWIEEQMKIGHDVLLEIDWQGAQQVKKQFRNAVGIFILPPSLAALEERLKKRGQDEPNVITRRLLAAGSEIAHAAEAQYVVINETFEHALAELECIVAATRLRFTSQYARHAELFVELGIHLPHAE.

A Guanylate kinase-like domain is found at 21-199 (GNLFMVVAPS…ALAELECIVA (179 aa)). An ATP-binding site is contributed by 28-35 (APSGAGKS).

This sequence belongs to the guanylate kinase family.

The protein localises to the cytoplasm. It carries out the reaction GMP + ATP = GDP + ADP. Functionally, essential for recycling GMP and indirectly, cGMP. This chain is Guanylate kinase, found in Burkholderia mallei (strain ATCC 23344).